We begin with the raw amino-acid sequence, 639 residues long: Kinesin-like protein KIF22 (639 aa).

The region spanning 18–345 (RVRVAVRLRP…LNFAAKSKQI (328 aa)) is the Kinesin motor domain. 102-109 (GPTGAGKT) contributes to the ATP binding site. The segment at 358–400 (IAALPAMKRPREEAETAAGSRQRKKSKTDSTESSPNTSMDAAS) is disordered. Polar residues predominate over residues 388-397 (TESSPNTSMD). Residues 439–484 (KRERMALLKKWEESQMEIERLKEKQKELEQKAIEAEARLEKSTNSD) are a coiled coil. The short motif at 549 to 552 (GREN) is the Important for regulated proteolytic degradation element.

This sequence belongs to the TRAFAC class myosin-kinesin ATPase superfamily. Kinesin family. In terms of processing, ubiquitinated, leading to its subsequent proteasomal degradation.

It is found in the nucleus. Its subcellular location is the cytoplasm. The protein resides in the cytoskeleton. Its function is as follows. Kinesin family member that is involved in spindle formation and the movements of chromosomes during mitosis and meiosis. Binds to microtubules and to DNA. This Xenopus tropicalis (Western clawed frog) protein is Kinesin-like protein KIF22 (kif22).